Reading from the N-terminus, the 618-residue chain is Glutamine--fructose-6-phosphate aminotransferase [isomerizing] (618 aa).

The active-site Nucleophile; for GATase activity is cysteine 2. The Glutamine amidotransferase type-2 domain maps to 2 to 226 (CGIVGYAGRN…DFETAVLSPT (225 aa)). The tract at residues 69 to 94 (HTRWATHGRPSTKNAHPHNSGGNPGK) is disordered. 2 SIS domains span residues 295–434 (SEDE…VRDR) and 467–608 (CAEG…IDKP). Catalysis depends on lysine 613, which acts as the For Fru-6P isomerization activity.

As to quaternary structure, homodimer.

The protein localises to the cytoplasm. The catalysed reaction is D-fructose 6-phosphate + L-glutamine = D-glucosamine 6-phosphate + L-glutamate. Its function is as follows. Catalyzes the first step in hexosamine metabolism, converting fructose-6P into glucosamine-6P using glutamine as a nitrogen source. The protein is Glutamine--fructose-6-phosphate aminotransferase [isomerizing] of Methanosarcina acetivorans (strain ATCC 35395 / DSM 2834 / JCM 12185 / C2A).